Consider the following 251-residue polypeptide: PF03932 family protein CutC (251 aa).

Belongs to the CutC family.

The protein localises to the cytoplasm. The sequence is that of PF03932 family protein CutC from Agrobacterium fabrum (strain C58 / ATCC 33970) (Agrobacterium tumefaciens (strain C58)).